We begin with the raw amino-acid sequence, 492 residues long: uncharacterized protein (492 aa).

Residues Tyr30–Met46 form a helical membrane-spanning segment. Residues Asn144–Gly210 form the J domain.

It localises to the membrane. This is an uncharacterized protein from Plasmodium falciparum (isolate 3D7).